The following is a 218-amino-acid chain: Replication protein RepB (218 aa).

The disordered stretch occupies residues 1–26 (MKSESKIDWTVPRPNKNPKTKQPYKR). The segment covering 16–26 (KNPKTKQPYKR) has biased composition (basic residues).

It belongs to the Gram-positive plasmids replication protein type 2 family.

Is essential for plasmid replication. Nicks the positive strand at the plus origin of replication. The sequence is that of Replication protein RepB (repB) from Lactiplantibacillus plantarum (Lactobacillus plantarum).